Here is a 193-residue protein sequence, read N- to C-terminus: ER membrane protein complex subunit 4 (193 aa).

2 helical membrane-spanning segments follow: residues 91–111 (ILAY…TLML) and 137–157 (LWPA…IGVY).

This sequence belongs to the EMC4 family.

It is found in the endoplasmic reticulum membrane. This Schizosaccharomyces pombe (strain 972 / ATCC 24843) (Fission yeast) protein is ER membrane protein complex subunit 4.